Here is a 441-residue protein sequence, read N- to C-terminus: MWFFKVGALLFLAALVSANNATTGPKVLCYYDGQMSLREGLGKITVTDIELALPFCTHLLYGFAGVNPETYRLKALDESLELDSGKGQYRLATTLKRRYPNLKVLLSVGGYKDLAEEKPFEKYLTLLESAGSRTAFVNSVYSTLKTYDFDGLDLAWQFPQTKPKRIRGWTGKVWHGFKKLFTGDSVLDPKADEHREEFTALVRDLKNALVADNFILGLTVLPHVNESIFMDVPLLKDNLDYVNLASFDQQTPERNPKEGDYTAPIYEPSERVEGNNVDAEASYWLKQGTPAGKIVIGIPTYGRGWKLVEKSGITGVPPIPADGPSIPGPHSGINGFYSWAEVCAKLPNPGNANLQGADQPLRKIGDPTRRFGAYAFRIPDENEEHGIWLSYEDPDTAGNKAAYVKAKGLGGISIFDLGNDDVRGACAGDKFPILRAAKYRL.

The signal sequence occupies residues 1–18; that stretch reads MWFFKVGALLFLAALVSA. Asparagine 20 is a glycosylation site (N-linked (GlcNAc...) asparagine). In terms of domain architecture, GH18 spans 25-441; it reads PKVLCYYDGQ…PILRAAKYRL (417 aa). A disulfide bond links cysteine 29 and cysteine 56. N-linked (GlcNAc...) asparagine glycosylation occurs at asparagine 225.

Belongs to the glycosyl hydrolase 18 family. IDGF subfamily. In terms of tissue distribution, salivary gland (at protein level).

Its subcellular location is the secreted. Functionally, promotes recruitment of host neutrophils at the bite site. Induces expression of IL1B and IL6 in the skin of the host. In terms of biological role, (Microbial infection) Enhances Zika virus replication and exacerbates disease pathogenesis in the host. The chain is Bacteria-responsive protein 1 from Aedes aegypti (Yellowfever mosquito).